Consider the following 215-residue polypeptide: ATP-dependent dethiobiotin synthetase BioD (215 aa).

13 to 18 serves as a coordination point for ATP; that stretch reads DIGKTV. Thr-17 lines the Mg(2+) pocket. The active site involves Lys-38. Thr-42 serves as a coordination point for substrate. Residues Asp-50, 115–118, and 175–176 contribute to the ATP site; these read EGAG and NH. Mg(2+) contacts are provided by Asp-50 and Glu-115.

This sequence belongs to the dethiobiotin synthetase family. In terms of assembly, homodimer. Mg(2+) serves as cofactor.

Its subcellular location is the cytoplasm. The catalysed reaction is (7R,8S)-7,8-diammoniononanoate + CO2 + ATP = (4R,5S)-dethiobiotin + ADP + phosphate + 3 H(+). It functions in the pathway cofactor biosynthesis; biotin biosynthesis; biotin from 7,8-diaminononanoate: step 1/2. Functionally, catalyzes a mechanistically unusual reaction, the ATP-dependent insertion of CO2 between the N7 and N8 nitrogen atoms of 7,8-diaminopelargonic acid (DAPA, also called 7,8-diammoniononanoate) to form a ureido ring. The protein is ATP-dependent dethiobiotin synthetase BioD of Neisseria meningitidis serogroup B (strain ATCC BAA-335 / MC58).